Here is a 276-residue protein sequence, read N- to C-terminus: Large ribosomal subunit protein uL2 (276 aa).

The segment at 224–254 is disordered; the sequence is VMNPVDHPHGGGEGRTSGGRHPVTPWGVPTK.

The protein belongs to the universal ribosomal protein uL2 family. As to quaternary structure, part of the 50S ribosomal subunit. Forms a bridge to the 30S subunit in the 70S ribosome.

Its function is as follows. One of the primary rRNA binding proteins. Required for association of the 30S and 50S subunits to form the 70S ribosome, for tRNA binding and peptide bond formation. It has been suggested to have peptidyltransferase activity; this is somewhat controversial. Makes several contacts with the 16S rRNA in the 70S ribosome. This is Large ribosomal subunit protein uL2 from Gluconobacter oxydans (strain 621H) (Gluconobacter suboxydans).